A 252-amino-acid chain; its full sequence is Adenosylcobinamide-GDP ribazoletransferase (252 aa).

A run of 7 helical transmembrane segments spans residues 4–24, 38–58, 60–80, 113–133, 141–161, 190–210, and 232–252; these read LFKG…PYVE, PIIG…INYL, ISIV…TGML, FSVI…HSFL, ILMF…ITII, LVCI…LLIV, and VAGF…CLFT.

This sequence belongs to the CobS family. Mg(2+) is required as a cofactor.

It is found in the cell membrane. The catalysed reaction is alpha-ribazole + adenosylcob(III)inamide-GDP = adenosylcob(III)alamin + GMP + H(+). It catalyses the reaction alpha-ribazole 5'-phosphate + adenosylcob(III)inamide-GDP = adenosylcob(III)alamin 5'-phosphate + GMP + H(+). The protein operates within cofactor biosynthesis; adenosylcobalamin biosynthesis; adenosylcobalamin from cob(II)yrinate a,c-diamide: step 7/7. Joins adenosylcobinamide-GDP and alpha-ribazole to generate adenosylcobalamin (Ado-cobalamin). Also synthesizes adenosylcobalamin 5'-phosphate from adenosylcobinamide-GDP and alpha-ribazole 5'-phosphate. This chain is Adenosylcobinamide-GDP ribazoletransferase, found in Clostridium botulinum (strain Eklund 17B / Type B).